Reading from the N-terminus, the 427-residue chain is Serine--tRNA ligase (427 aa).

An L-serine-binding site is contributed by 231–233; the sequence is TAE. 262-264 provides a ligand contact to ATP; the sequence is RSE. Glutamate 285 is an L-serine binding site. Position 349-352 (349-352) interacts with ATP; the sequence is EISS. Residue serine 385 coordinates L-serine.

Belongs to the class-II aminoacyl-tRNA synthetase family. Type-1 seryl-tRNA synthetase subfamily. As to quaternary structure, homodimer. The tRNA molecule binds across the dimer.

The protein localises to the cytoplasm. The enzyme catalyses tRNA(Ser) + L-serine + ATP = L-seryl-tRNA(Ser) + AMP + diphosphate + H(+). It catalyses the reaction tRNA(Sec) + L-serine + ATP = L-seryl-tRNA(Sec) + AMP + diphosphate + H(+). The protein operates within aminoacyl-tRNA biosynthesis; selenocysteinyl-tRNA(Sec) biosynthesis; L-seryl-tRNA(Sec) from L-serine and tRNA(Sec): step 1/1. Catalyzes the attachment of serine to tRNA(Ser). Is also able to aminoacylate tRNA(Sec) with serine, to form the misacylated tRNA L-seryl-tRNA(Sec), which will be further converted into selenocysteinyl-tRNA(Sec). The sequence is that of Serine--tRNA ligase from Listeria monocytogenes serotype 4b (strain CLIP80459).